A 200-amino-acid chain; its full sequence is Adenylate kinase (200 aa).

10–15 contributes to the ATP binding site; it reads GAGKGT. The tract at residues 30 to 59 is NMP; sequence STGDMLRAAVAAGTPVGLEAKSIMESGGLV. AMP is bound by residues T31, R36, 57-59, 85-88, and Q92; these read GLV and GFPR. The segment at 126 to 142 is LID; sequence KRAEETAARGQPVRKDD. R127 contacts ATP. R139 and R150 together coordinate AMP. K178 contacts ATP.

The protein belongs to the adenylate kinase family. As to quaternary structure, monomer.

It is found in the cytoplasm. The catalysed reaction is AMP + ATP = 2 ADP. Its pathway is purine metabolism; AMP biosynthesis via salvage pathway; AMP from ADP: step 1/1. Functionally, catalyzes the reversible transfer of the terminal phosphate group between ATP and AMP. Plays an important role in cellular energy homeostasis and in adenine nucleotide metabolism. The polypeptide is Adenylate kinase (Methylorubrum populi (strain ATCC BAA-705 / NCIMB 13946 / BJ001) (Methylobacterium populi)).